A 375-amino-acid polypeptide reads, in one-letter code: Chaperone protein DnaJ (375 aa).

The J domain maps to 5 to 70 (DYYDVLGVNR…QKRGAYDQFG (66 aa)). The CR-type zinc finger occupies 135 to 213 (GCEKQIRIPS…CHGAGQKKTT (79 aa)). Zn(2+) is bound by residues Cys-148, Cys-151, Cys-165, Cys-168, Cys-187, Cys-190, Cys-201, and Cys-204. 4 CXXCXGXG motif repeats span residues 148 to 155 (CSTCNGTG), 165 to 172 (CATCGGHG), 187 to 194 (CPTCHGTG), and 201 to 208 (CGSCHGAG).

Belongs to the DnaJ family. In terms of assembly, homodimer. The cofactor is Zn(2+).

The protein resides in the cytoplasm. Functionally, participates actively in the response to hyperosmotic and heat shock by preventing the aggregation of stress-denatured proteins and by disaggregating proteins, also in an autonomous, DnaK-independent fashion. Unfolded proteins bind initially to DnaJ; upon interaction with the DnaJ-bound protein, DnaK hydrolyzes its bound ATP, resulting in the formation of a stable complex. GrpE releases ADP from DnaK; ATP binding to DnaK triggers the release of the substrate protein, thus completing the reaction cycle. Several rounds of ATP-dependent interactions between DnaJ, DnaK and GrpE are required for fully efficient folding. Also involved, together with DnaK and GrpE, in the DNA replication of plasmids through activation of initiation proteins. This is Chaperone protein DnaJ from Chromobacterium violaceum (strain ATCC 12472 / DSM 30191 / JCM 1249 / CCUG 213 / NBRC 12614 / NCIMB 9131 / NCTC 9757 / MK).